The sequence spans 356 residues: Peptide chain release factor 1 (356 aa).

At glutamine 233 the chain carries N5-methylglutamine.

Belongs to the prokaryotic/mitochondrial release factor family. In terms of processing, methylated by PrmC. Methylation increases the termination efficiency of RF1.

The protein resides in the cytoplasm. Functionally, peptide chain release factor 1 directs the termination of translation in response to the peptide chain termination codons UAG and UAA. This is Peptide chain release factor 1 (prfA) from Bacillus subtilis (strain 168).